A 181-amino-acid chain; its full sequence is Probable pyruvoyl-dependent arginine decarboxylase (181 aa).

Ser43 carries the pyruvic acid (Ser) modification.

It belongs to the PdaD family. Pyruvate is required as a cofactor.

It carries out the reaction L-arginine + H(+) = agmatine + CO2. This is Probable pyruvoyl-dependent arginine decarboxylase from Chlorobium phaeovibrioides (strain DSM 265 / 1930) (Prosthecochloris vibrioformis (strain DSM 265)).